Here is a 350-residue protein sequence, read N- to C-terminus: Leucine-rich repeat-containing protein 58 (350 aa).

10 LRR repeats span residues 14 to 34 (NLTH…NKRK), 35 to 56 (DVQQ…VASF), 58 to 80 (HLHL…LGLT), 81 to 102 (KLKT…KEMG), 105 to 125 (RLEV…QFLQ), 128 to 149 (TLKS…IENL), 151 to 173 (SLEF…ANLP), 174 to 195 (YLSY…LAQV), 197 to 218 (SLRS…ILSL), and 220 to 240 (HLHE…RDLT).

This is Leucine-rich repeat-containing protein 58 (lrrc58) from Xenopus laevis (African clawed frog).